The sequence spans 180 residues: Lipid droplet coating protein Cap20 (180 aa).

This sequence belongs to the perilipin family. Interacts with class I hydrophobin Hydr1. Interacts also with the cAMP-dependent protein kinase catalytic subunit PkaC1.

Its subcellular location is the lipid droplet. Lipid droplet coating protein that regulates lipid metabolism, appressorial turgor pressure, and virulence. Mature appressoria with high turgor pressure are essential to penetrate the leaf surface. The protein is Lipid droplet coating protein Cap20 of Colletotrichum siamense (Anthracnose fungus).